We begin with the raw amino-acid sequence, 271 residues long: Phosphatidate cytidylyltransferase (271 aa).

The next 8 helical transmembrane spans lie at L12–I32, F53–P73, L75–L95, L111–W131, G136–G156, W174–Y194, L199–G219, and S251–P271.

This sequence belongs to the CDS family.

Its subcellular location is the cell inner membrane. It catalyses the reaction a 1,2-diacyl-sn-glycero-3-phosphate + CTP + H(+) = a CDP-1,2-diacyl-sn-glycerol + diphosphate. Its pathway is phospholipid metabolism; CDP-diacylglycerol biosynthesis; CDP-diacylglycerol from sn-glycerol 3-phosphate: step 3/3. The chain is Phosphatidate cytidylyltransferase (cdsA) from Pseudomonas aeruginosa (strain ATCC 15692 / DSM 22644 / CIP 104116 / JCM 14847 / LMG 12228 / 1C / PRS 101 / PAO1).